The primary structure comprises 420 residues: Dihydrolipoyllysine-residue succinyltransferase component of 2-oxoglutarate dehydrogenase complex (420 aa).

A Lipoyl-binding domain is found at 1 to 76 (MAEVKVPELA…EVGQAVAVVG (76 aa)). N6-lipoyllysine is present on K42. The disordered stretch occupies residues 75–201 (VGEGQVNTSN…EKMSRRKKTA (127 aa)). Polar residues predominate over residues 81-90 (NTSNDSSNES). Residues 91–102 (SQKDEAKEKETP) are compositionally biased toward basic and acidic residues. The segment covering 103 to 127 (KQSNPNSSESENTQDNSQQRINATP) has biased composition (polar residues). Positions 124–160 (NATPSARRHARKNGVDLSEVSGKGNDVLRKDDVENSQ) constitute a Peripheral subunit-binding (PSBD) domain. Residues 149–158 (DVLRKDDVEN) are compositionally biased toward basic and acidic residues. Residues 159–188 (SQKSSSQTAKSESKSQNSGSKQSNNNPSKP) show a composition bias toward low complexity. Active-site residues include H391 and D395.

Belongs to the 2-oxoacid dehydrogenase family. In terms of assembly, forms a 24-polypeptide structural core with octahedral symmetry. Part of the 2-oxoglutarate dehydrogenase (OGDH) complex composed of E1 (2-oxoglutarate dehydrogenase), E2 (dihydrolipoamide succinyltransferase) and E3 (dihydrolipoamide dehydrogenase); the complex contains multiple copies of the three enzymatic components (E1, E2 and E3). It depends on (R)-lipoate as a cofactor.

The enzyme catalyses N(6)-[(R)-dihydrolipoyl]-L-lysyl-[protein] + succinyl-CoA = N(6)-[(R)-S(8)-succinyldihydrolipoyl]-L-lysyl-[protein] + CoA. Its pathway is amino-acid degradation; L-lysine degradation via saccharopine pathway; glutaryl-CoA from L-lysine: step 6/6. In terms of biological role, E2 component of the 2-oxoglutarate dehydrogenase (OGDH) complex which catalyzes the second step in the conversion of 2-oxoglutarate to succinyl-CoA and CO(2). This Staphylococcus epidermidis (strain ATCC 12228 / FDA PCI 1200) protein is Dihydrolipoyllysine-residue succinyltransferase component of 2-oxoglutarate dehydrogenase complex (odhB).